The primary structure comprises 176 residues: Ribosome maturation factor RimM (176 aa).

The PRC barrel domain maps to 97 to 176 (DSEFYHRDLI…QILVDWDPDF (80 aa)).

Belongs to the RimM family. Binds ribosomal protein uS19.

The protein resides in the cytoplasm. An accessory protein needed during the final step in the assembly of 30S ribosomal subunit, possibly for assembly of the head region. Essential for efficient processing of 16S rRNA. May be needed both before and after RbfA during the maturation of 16S rRNA. It has affinity for free ribosomal 30S subunits but not for 70S ribosomes. This chain is Ribosome maturation factor RimM, found in Shewanella frigidimarina (strain NCIMB 400).